The sequence spans 299 residues: MWFKQISFYPLNKEKLPEADALADKLAEAEFTHCQGLDWFSEGFTAPVSFSPELVFPADFTLRVALKKEEKVLPAGVIRDILEEKVAEIQNNEARNVGRKEKQELKEQITDDLLPRAFTRSSRTEAVFNTRHGYLLVNNAASAKAENILTKLREALGGLEASLPNTKQSPSSLMTGWLLQGHCEGGFELDSDCELKGTGDIVPVVKVSKQDLTADEVVQHVKNGKTVTQLGLVWREQIAFILTQDFTLKRIQYLDVLQEEAESNGDDAAGLAFASQILMAESVSIMLEELVSYLGGWQD.

The protein belongs to the RdgC family.

The protein resides in the cytoplasm. Its subcellular location is the nucleoid. Functionally, may be involved in recombination. The chain is Recombination-associated protein RdgC from Neisseria meningitidis serogroup C (strain 053442).